We begin with the raw amino-acid sequence, 441 residues long: Coiled-coil domain-containing protein 91 (441 aa).

Residues M1 to D16 are GGA1-binding motif. Residues M1–S26 are disordered. Phosphoserine is present on residues S43 and S46. Coiled-coil stretches lie at residues S130–A209 and E249–D407. The segment at L210–R413 is homodimerization.

In terms of assembly, homodimer. Interacts with GGA1, GGA2 and AP1G1. Widely expressed.

The protein localises to the membrane. It localises to the golgi apparatus. The protein resides in the trans-Golgi network membrane. Its subcellular location is the trans-Golgi network. Involved in the regulation of membrane traffic through the trans-Golgi network (TGN). Functions in close cooperation with the GGAs in the sorting of hydrolases to lysosomes. This Homo sapiens (Human) protein is Coiled-coil domain-containing protein 91 (CCDC91).